The following is a 172-amino-acid chain: DNA-directed RNA polymerase II subunit rpb7 (172 aa).

It belongs to the eukaryotic RPB7/RPC8 RNA polymerase subunit family. In terms of assembly, component of the RNA polymerase II (Pol II) complex consisting of 12 subunits. RPB4 and RPB7 form a subcomplex that protrudes from the 10-subunit Pol II core complex.

Its subcellular location is the nucleus. Functionally, DNA-dependent RNA polymerase catalyzes the transcription of DNA into RNA using the four ribonucleoside triphosphates as substrates. Component of RNA polymerase II which synthesizes mRNA precursors and many functional non-coding RNAs. Pol II is the central component of the basal RNA polymerase II transcription machinery. It is composed of mobile elements that move relative to each other. RPB7 is part of a subcomplex with RPB4 that binds to a pocket formed by RPB1, RPB2 and RPB6 at the base of the clamp element. The RPB4-RPB7 subcomplex seems to lock the clamp via RPB7 in the closed conformation thus preventing double-stranded DNA to enter the active site cleft. The RPB4-RPB7 subcomplex binds single-stranded DNA and RNA. In Dictyostelium discoideum (Social amoeba), this protein is DNA-directed RNA polymerase II subunit rpb7 (polr2g).